The following is a 463-amino-acid chain: MSGLSLAQQLKQLHSNNVSVPDPESAYSNLDSHDIQRKGDEGREHYVDVGPSRLRMELGGTGGGTLTGPKYEGVKTGRMKIFDDDDDDDDDREGNGSEEGSDGEGDEDEDGDEDDEDEEDEDEDEEESDEDEQGEDEDEDEEEQPQPRANGSKQALDPVASLRNSRLKDVEKGQAIRKQKALFESLITLRITFQKALTASNTVPPTLPEDPENELAYKKASILKSLGELNERLFTLRESISLPGELGEDVSLGKRKRAEGDDAQGQAYWIKAAKESLGIADRSHPQLLPILNKWSSKIQAASLQLGSKQAGGSKFLQQMKNGAGGVVEAIESGINSKREAEKTLMESEETGYRALLREVIESRSGSGPAADLTHLRREKKKKREAERGGSKGRKLRYTVHEKAQNFVVPIPLSHGWHEEQVDELFSSLFGGVGMKGATAEKTVGLDVGTADEGLAELGGLRVF.

A disordered region spans residues 14–174; the sequence is HSNNVSVPDP…SRLKDVEKGQ (161 aa). Residues 31 to 47 are compositionally biased toward basic and acidic residues; the sequence is DSHDIQRKGDEGREHYV. 2 stretches are compositionally biased toward acidic residues: residues 83 to 92 and 99 to 144; these read DDDDDDDDDR and EGSD…EEEQ.

This sequence belongs to the AATF family.

The protein localises to the nucleus. It is found in the nucleolus. This Cryptococcus neoformans var. neoformans serotype D (strain B-3501A) (Filobasidiella neoformans) protein is Protein BFR2 (BFR2).